We begin with the raw amino-acid sequence, 249 residues long: Neurotrophic factor BDNF precursor form (249 aa).

The N-terminal stretch at 1–18 (MTILFLTMVISYFGCMKA) is a signal peptide. The propeptide occupies 19–130 (APMKEANVHG…AANMSMRVRR (112 aa)). Asparagine 123 carries N-linked (GlcNAc...) asparagine glycosylation. 3 cysteine pairs are disulfide-bonded: cysteine 143–cysteine 210, cysteine 188–cysteine 239, and cysteine 198–cysteine 241.

This sequence belongs to the NGF-beta family. In terms of assembly, monomers and homodimers. Binds to NTRK2/TRKB. Can form heterodimers with other neurotrophin family members, such as NTF3 and NTF4 (in vitro), but the physiological relevance of this is not clear. BDNF precursor form: interacts with the heterodimer formed by NGFR and SORCS2. Mature BDNF has much lower affinity for the heterodimer formed by NGFR and SORCS2. N-glycosylated and glycosulfated, contrary to mature BDNF. Post-translationally, mature BDNF is produced by proteolytic removal of the propeptide, catalyzed by a FURIN family member. In addition, the precursor form is proteolytically cleaved within the propeptide, but this is not an obligatory intermediate for the production of mature BDNF. Can be converted into mature BDNF by plasmin (PLG).

The protein resides in the secreted. Its function is as follows. Important signaling molecule that activates signaling cascades downstream of NTRK2. During development, promotes the survival and differentiation of selected neuronal populations of the peripheral and central nervous systems. Participates in axonal growth, pathfinding and in the modulation of dendritic growth and morphology. Major regulator of synaptic transmission and plasticity at adult synapses in many regions of the CNS. The versatility of BDNF is emphasized by its contribution to a range of adaptive neuronal responses including long-term potentiation (LTP), long-term depression (LTD), certain forms of short-term synaptic plasticity, as well as homeostatic regulation of intrinsic neuronal excitability. In terms of biological role, important signaling molecule that activates signaling cascades downstream of NTRK2. Activates signaling cascades via the heterodimeric receptor formed by NGFR and SORCS2. Signaling via NGFR and SORCS2 plays a role in synaptic plasticity and long-term depression (LTD). Binding to NGFR and SORCS2 promotes neuronal apoptosis. Promotes neuronal growth cone collapse. The protein is Neurotrophic factor BDNF precursor form (Bdnf) of Rattus norvegicus (Rat).